A 372-amino-acid chain; its full sequence is tRNA-specific 2-thiouridylase MnmA (372 aa).

Residues 16 to 23 (GMSGGVDS) and Met42 each bind ATP. Positions 102–104 (NPD) are interaction with target base in tRNA. Cys107 acts as the Nucleophile in catalysis. Cys107 and Cys205 form a disulfide bridge. Gly132 lines the ATP pocket. The segment at 155–157 (KDQ) is interaction with tRNA. Cys205 functions as the Cysteine persulfide intermediate in the catalytic mechanism. The interaction with tRNA stretch occupies residues 317–318 (RY).

This sequence belongs to the MnmA/TRMU family.

It is found in the cytoplasm. It catalyses the reaction S-sulfanyl-L-cysteinyl-[protein] + uridine(34) in tRNA + AH2 + ATP = 2-thiouridine(34) in tRNA + L-cysteinyl-[protein] + A + AMP + diphosphate + H(+). In terms of biological role, catalyzes the 2-thiolation of uridine at the wobble position (U34) of tRNA, leading to the formation of s(2)U34. The chain is tRNA-specific 2-thiouridylase MnmA from Shewanella sp. (strain ANA-3).